A 65-amino-acid chain; its full sequence is Large ribosomal subunit protein bL35 (65 aa).

This sequence belongs to the bacterial ribosomal protein bL35 family.

This chain is Large ribosomal subunit protein bL35, found in Stenotrophomonas maltophilia (strain R551-3).